Consider the following 303-residue polypeptide: Putative ring-cleaving dioxygenase MhqE (303 aa).

VOC domains follow at residues 5–129 (GLHH…IMED) and 150–266 (GMKG…IATD). Fe cation contacts are provided by histidine 8, histidine 215, and glutamate 262.

It belongs to the extradiol ring-cleavage dioxygenase family. Fe(2+) serves as cofactor.

It localises to the cytoplasm. In terms of biological role, putative ring-cleavage dioxygenase that may contribute to the degradation of aromatic compounds. In Bacillus subtilis (strain 168), this protein is Putative ring-cleaving dioxygenase MhqE (mhqE).